The primary structure comprises 328 residues: Delta(3,5)-Delta(2,4)-dienoyl-CoA isomerase, mitochondrial (328 aa).

The transit peptide at 1 to 26 directs the protein to the mitochondrion; the sequence is MAAGIVASRRLRDLLTRRLTASNYPG. Residues 116 to 120 and Gly174 each bind substrate; that span reads AGVDL. The residue at position 231 (Lys231) is an N6-succinyllysine. At Ser268 the chain carries Phosphoserine. A Microbody targeting signal motif is present at residues 326 to 328; sequence SKL. Position 327 is an N6-acetyllysine (Lys327).

It belongs to the enoyl-CoA hydratase/isomerase family. As to quaternary structure, homohexamer.

The protein resides in the mitochondrion. It is found in the peroxisome. The enzyme catalyses (3E,5Z)-octadienoyl-CoA = (2E,4E)-octadienoyl-CoA. It carries out the reaction (3E,5Z,8Z,11Z,14Z)-eicosapentaenoyl-CoA = (2E,4E,8Z,11Z,14Z)-eicosapentaenoyl-CoA. It participates in lipid metabolism; fatty acid beta-oxidation. Isomerization of 3-trans,5-cis-dienoyl-CoA to 2-trans,4-trans-dienoyl-CoA. The polypeptide is Delta(3,5)-Delta(2,4)-dienoyl-CoA isomerase, mitochondrial (ECH1) (Pongo abelii (Sumatran orangutan)).